The primary structure comprises 160 residues: Lipoprotein signal peptidase (160 aa).

A run of 3 helical transmembrane segments spans residues 5 to 25 (LVFF…KFII), 60 to 80 (IEWL…AFFI), and 84 to 104 (LPFL…AGTV). Residues aspartate 118 and aspartate 132 contribute to the active site. Residues 128-148 (FNIADSCLTVGVIGLLLLYIV) form a helical membrane-spanning segment.

This sequence belongs to the peptidase A8 family.

It is found in the cell membrane. It catalyses the reaction Release of signal peptides from bacterial membrane prolipoproteins. Hydrolyzes -Xaa-Yaa-Zaa-|-(S,diacylglyceryl)Cys-, in which Xaa is hydrophobic (preferably Leu), and Yaa (Ala or Ser) and Zaa (Gly or Ala) have small, neutral side chains.. Its pathway is protein modification; lipoprotein biosynthesis (signal peptide cleavage). In terms of biological role, this protein specifically catalyzes the removal of signal peptides from prolipoproteins. In Dehalococcoides mccartyi (strain ATCC BAA-2100 / JCM 16839 / KCTC 5957 / BAV1), this protein is Lipoprotein signal peptidase.